The chain runs to 95 residues: uncharacterized protein (95 aa).

The segment at 1 to 73 is disordered; sequence MAHFKDDLQT…AQQPSMRTEL (73 aa). 2 stretches are compositionally biased toward polar residues: residues 42-52 and 62-73; these read SNHSPSVQESP and GSAQQPSMRTEL.

This is an uncharacterized protein from Homo sapiens (Human).